The primary structure comprises 142 residues: Hemoglobin subunit alpha (142 aa).

The Globin domain maps to 2–142 (KLSAEDKHNV…VGHVLTSKYR (141 aa)). An O2-binding site is contributed by histidine 59. Histidine 88 contributes to the heme b binding site.

It belongs to the globin family. Heterotetramer of two alpha chains and two beta chains. Red blood cells.

In terms of biological role, involved in oxygen transport from the lung to the various peripheral tissues. This Taricha granulosa (Roughskin newt) protein is Hemoglobin subunit alpha (HBA).